We begin with the raw amino-acid sequence, 286 residues long: Protein NipSnap homolog 2 (286 aa).

The N-terminal 23 residues, 1 to 23, are a transit peptide targeting the mitochondrion; the sequence is MAARVLRARGAAWAGGLLQRAAP.

It belongs to the NipSnap family. Interacts with CALCOCO2/NDP52, NBR1, SQSTM1/p62, TAX1BP1 and WDFY3/ALFY. Interacts with ATG8 family proteins (MAP1LC3A, MAP1LC3B, MAP1LC3C, GABARAP, GABARAPL1 and GABARAPL2). Interacts with VDAC1. Widely expressed. Most abundant in heart and skeletal muscle.

It is found in the mitochondrion matrix. Its function is as follows. Protein involved in mitophagy by facilitating recruitment of the autophagy machinery required for clearance of damaged mitochondria. Accumulates on the mitochondria surface in response to mitochondrial depolarization and acts as a 'eat me' signal by recruiting proteins involved in selective autophagy, such as autophagy receptors (CALCOCO2/NDP52, NBR1, SQSTM1/p62, TAX1BP1 and WDFY3/ALFY) and ATG8 family proteins (MAP1LC3A, MAP1LC3B, MAP1LC3C, GABARAP, GABARAPL1 and GABARAPL2). The sequence is that of Protein NipSnap homolog 2 from Homo sapiens (Human).